Here is a 79-residue protein sequence, read N- to C-terminus: Neurotoxin ShK-like1 (79 aa).

Positions 1-25 are cleaved as a signal peptide; sequence MSRKLLAVLMVCTFFLIAASMGTNA. The propeptide occupies 26–35; that stretch reads LPFHEGIERR. In terms of domain architecture, ShKT spans 39-78; that stretch reads CVDKMPFVCMRKDIPAICKNRNHRSYAFIMDVCRKTCGQC. Intrachain disulfides connect Cys39/Cys78, Cys47/Cys71, and Cys56/Cys75.

Expressed in nematocytes (in planulae and primary polyps). Is localized predominantly in the body column nematocytes and not in the tentacles (in primary polyps).

The protein resides in the nematocyst. It localises to the secreted. Neurotoxin. In vivo, induces contraction paralysis followed by death (within 2 hours) on zebrafish larvae. Also induces body contraction in Nematostella 11-dpf polyps. This Nematostella vectensis (Starlet sea anemone) protein is Neurotoxin ShK-like1.